We begin with the raw amino-acid sequence, 276 residues long: Syntaxin-12 (276 aa).

At serine 2 the chain carries N-acetylserine. The Cytoplasmic segment spans residues 2 to 248 (SYGPLDMYRN…RAAYYQKKSR (247 aa)). A coiled-coil region spans residues 33–131 (IQRISQATAQ…RRVSEKEKES (99 aa)). Serine 139, serine 142, serine 218, and serine 225 each carry phosphoserine. One can recognise a t-SNARE coiled-coil homology domain in the interval 178 to 240 (LELIKERETA…ERATEQLQRA (63 aa)). The chain crosses the membrane as a helical; Anchor for type IV membrane protein span at residues 249-269 (KKMCILVLVLSVIILILGLII). Residues 270 to 276 (WLVYKTK) lie on the Vesicular side of the membrane.

It belongs to the syntaxin family. Interacts with NAPA and SNAP23. Identified in a complex containing STX6, STX12, VAMP4 and VTI1A. Associates with the BLOC-1 complex. Interacts with BLOC1S6. Interacts with GRIPAP1. Forms a complex with GRIP1, GRIA2 and NSG1; controls the intracellular fate of AMPAR and the endosomal sorting of the GRIA2 subunit toward recycling and membrane targeting. Interacts with NSG1. Interacts with TPC1. Interacts (via N-terminus) with VPS13B.

Its subcellular location is the endosome membrane. It localises to the golgi apparatus membrane. The protein resides in the endomembrane system. The protein localises to the early endosome membrane. It is found in the recycling endosome membrane. Its function is as follows. SNARE promoting fusion of transport vesicles with target membranes. Together with SNARE STX6, promotes movement of vesicles from endosomes to the cell membrane, and may therefore function in the endocytic recycling pathway. Through complex formation with GRIP1, GRIA2 and NSG1 controls the intracellular fate of AMPAR and the endosomal sorting of the GRIA2 subunit toward recycling and membrane targeting. This chain is Syntaxin-12 (STX12), found in Homo sapiens (Human).